Consider the following 235-residue polypeptide: Serine/arginine-rich splicing factor 7 (235 aa).

Positions threonine 11–glycine 84 constitute an RRM domain. Lysine 24 is subject to N6-acetyllysine; alternate. Lysine 24 participates in a covalent cross-link: Glycyl lysine isopeptide (Lys-Gly) (interchain with G-Cter in SUMO2); alternate. Serine 32 bears the Phosphoserine mark. A sufficient for interaction with NXF1 region spans residues leucine 81–arginine 98. The CCHC-type zinc-finger motif lies at aspartate 104–histidine 120. A compositionally biased stretch (basic residues) spans serine 123 to arginine 180. The disordered stretch occupies residues serine 123–aspartate 235. Tandem repeats lie at residues arginine 153 to proline 160, arginine 161 to leucine 168, arginine 169 to leucine 176, and arginine 177 to isoleucine 184. A 6 X 8 AA repeats of R-R-S-R-S-X-S-X region spans residues arginine 153 to glycine 223. Phosphoserine is present on residues serine 163, serine 165, and serine 167. Phosphoserine occurs at positions 181, 183, 189, 191, and 193. Residues serine 187–arginine 219 show a composition bias toward basic residues. The 5; approximate repeat unit spans residues serine 208 to proline 215. The 6; approximate repeat unit spans residues lysine 216–glycine 223. A phosphoserine mark is found at serine 228 and serine 230.

This sequence belongs to the splicing factor SR family. In terms of assembly, found in large molecular weight complexes containing CCNL1 and the p110 isoforms of either CDC2L1 or CDC2L2. Interacts with CCNL2 and CPSF6. Interacts with NXF1. Interacts with YTHDC1. In terms of processing, extensively phosphorylated on serine residues in the RS domain.

It is found in the nucleus. It localises to the cytoplasm. In terms of biological role, required for pre-mRNA splicing. Represses the splicing of MAPT/Tau exon 10. May function as export adapter involved in mRNA nuclear export such as of histone H2A. Binds mRNA which is thought to be transferred to the NXF1-NXT1 heterodimer for export (TAP/NXF1 pathway); enhances NXF1-NXT1 RNA-binding activity. RNA-binding is semi-sequence specific. This Bos taurus (Bovine) protein is Serine/arginine-rich splicing factor 7 (SRSF7).